Here is a 265-residue protein sequence, read N- to C-terminus: Ribosomal RNA large subunit methyltransferase E (265 aa).

S-adenosyl-L-methionine contacts are provided by G83, W85, D106, D122, and D146. K186 serves as the catalytic Proton acceptor. The disordered stretch occupies residues 230–265 (KGREAGPPSGGSERPVDVSKDLSARSDSEGPGDAEG). Basic and acidic residues predominate over residues 243-257 (RPVDVSKDLSARSDS).

The protein belongs to the class I-like SAM-binding methyltransferase superfamily. RNA methyltransferase RlmE family.

The protein resides in the cytoplasm. The catalysed reaction is uridine(2552) in 23S rRNA + S-adenosyl-L-methionine = 2'-O-methyluridine(2552) in 23S rRNA + S-adenosyl-L-homocysteine + H(+). Specifically methylates the uridine in position 2552 of 23S rRNA at the 2'-O position of the ribose in the fully assembled 50S ribosomal subunit. The sequence is that of Ribosomal RNA large subunit methyltransferase E from Mesorhizobium japonicum (strain LMG 29417 / CECT 9101 / MAFF 303099) (Mesorhizobium loti (strain MAFF 303099)).